The chain runs to 509 residues: Proto-oncogene tyrosine-protein kinase LCK (509 aa).

Glycine 2 carries the N-myristoyl glycine lipid modification. Positions 2-72 (GCGCSSHLED…DNLVIALHSY (71 aa)) are interactions with CD4 and CD8. 2 S-palmitoyl cysteine lipidation sites follow: cysteine 3 and cysteine 5. The 61-residue stretch at 61–121 (LQDNLVIALH…PFNFVAKANS (61 aa)) folds into the SH3 domain. Residue lysine 99 forms a Glycyl lysine isopeptide (Lys-Gly) (interchain with G-Cter in ubiquitin) linkage. Serine 102 bears the Phosphoserine mark. Residues 127–224 (WFFKNLSRKD…GLCTRLSRPC (98 aa)) form the SH2 domain. The interaction with PTPRH stretch occupies residues 154-242 (RESESTAGSF…WWEDEWEVPR (89 aa)). Position 159 is a phosphothreonine (threonine 159). Serine 162 is modified (phosphoserine). Tyrosine 192 is modified (phosphotyrosine). Serine 194 carries the phosphoserine modification. Positions 245–498 (LKLVERLGAG…YLRSVLEDFF (254 aa)) constitute a Protein kinase domain. ATP contacts are provided by residues 251-259 (LGAGQFGEV) and lysine 273. Lysine 276 participates in a covalent cross-link: Glycyl lysine isopeptide (Lys-Gly) (interchain with G-Cter in ubiquitin). Residue aspartate 364 is the Proton acceptor of the active site. Tyrosine 394 carries the phosphotyrosine; by autocatalysis modification. Residue tyrosine 505 is modified to Phosphotyrosine; by CSK.

This sequence belongs to the protein kinase superfamily. Tyr protein kinase family. In terms of assembly, binds to the cytoplasmic domain of cell surface receptors, such as AXL, CD2, CD4, CD5, CD8, CD44, CD45 and CD122. Also binds to effector molecules, such as PI4K, VAV1, RASA1, FYB1 and to other protein kinases including CDK1, RAF1, ZAP70 and SYK. Binds to phosphatidylinositol 3'-kinase (PI3K) from T-lymphocytes through its SH3 domain and to the tyrosine phosphorylated form of KHDRBS1/p70 through its SH2 domain. Interacts with SQSTM1. Interacts with phosphorylated LIME1. Interacts with CBLB and PTPRH. Interacts with RUNX3. Forms a signaling complex with EPHA1, PTK2B and PI3-KINASE; upon activation by EFNA1 which may regulate T-lymphocytes migration. Associates with ZAP70 and RHOH; these interactions allow LCK-mediated RHOH and CD3 subunit phosphorylations in the presence of functional ZAP70. Interacts with Saimiriine herpesvirus 2 TIP. Interacts with UNC119; this interaction plays a crucial role in activation of LCK. Interacts with CEACAM1 (via cytoplasmic domain); mediates CEACAM1 phosphorylation resulting in PTPN6 recruitment that dephosphorylates TCR stimulation-induced CD247 and ZAP70. Interacts with CD160. Interacts with CD48. Autophosphorylated on Tyr-394, increasing enzymatic activity, this site is dephosphorylated by PTN22. Phosphorylated on Tyr-505 by CSK, decreasing activity. Dephosphorylated by PTPRC/CD45. Dephosphorylation at Tyr-394 by PTPN2 negatively regulates T-cells differentiation. Dephosphorylation at Tyr-394 by DUSP22 negatively regulates T-cell receptor signaling. In terms of processing, myristoylation is required prior to palmitoylation. Post-translationally, palmitoylation regulates association with the plasma membrane and could be mediated by ZDHHC2. 'Lys-63'-linked ubiquitinated at Lys-99 and Lys-276 by UBR2; this modification is required for autophosphorylation at Tyr-394. In terms of tissue distribution, expressed specifically in lymphoid cells.

Its subcellular location is the cell membrane. It is found in the cytoplasm. The protein resides in the cytosol. It carries out the reaction L-tyrosyl-[protein] + ATP = O-phospho-L-tyrosyl-[protein] + ADP + H(+). The relative activities of the inhibitory tyrosine-protein kinase CSK and the activating tyrosine-protein phosphatase PTPRC/CD45 determine the level of LCK activity. These interactions allow rapid and efficient activation of LCK in response to TCR stimulation. Non-receptor tyrosine-protein kinase that plays an essential role in the selection and maturation of developing T-cells in the thymus and in the function of mature T-cells. Plays a key role in T-cell antigen receptor (TCR)-linked signal transduction pathways. Constitutively associated with the cytoplasmic portions of the CD4 and CD8 surface receptors. Association of the TCR with a peptide antigen-bound MHC complex facilitates the interaction of CD4 and CD8 with MHC class II and class I molecules, respectively, thereby recruiting the associated LCK protein to the vicinity of the TCR/CD3 complex. LCK then phosphorylates tyrosine residues within the immunoreceptor tyrosine-based activation motifs (ITAM) of the cytoplasmic tails of the TCR-gamma chains and CD3 subunits, initiating the TCR/CD3 signaling pathway. Once stimulated, the TCR recruits the tyrosine kinase ZAP70, that becomes phosphorylated and activated by LCK. Following this, a large number of signaling molecules are recruited, ultimately leading to lymphokine production. LCK also contributes to signaling by other receptor molecules. Associates directly with the cytoplasmic tail of CD2, which leads to hyperphosphorylation and activation of LCK. Also plays a role in the IL2 receptor-linked signaling pathway that controls the T-cell proliferative response. Binding of IL2 to its receptor results in increased activity of LCK. Is expressed at all stages of thymocyte development and is required for the regulation of maturation events that are governed by both pre-TCR and mature alpha beta TCR. Phosphorylates other substrates including RUNX3, PTK2B/PYK2, the microtubule-associated protein MAPT, RHOH or TYROBP. The sequence is that of Proto-oncogene tyrosine-protein kinase LCK (LCK) from Saimiri sciureus (Common squirrel monkey).